The primary structure comprises 311 residues: Syntaxin-111 (311 aa).

Residues 1 to 284 (MNDLMTKSFM…AREHQRSSRK (284 aa)) lie on the Cytoplasmic side of the membrane. The t-SNARE coiled-coil homology domain occupies 213-275 (VHEIQDRHDA…QGGNKELRKA (63 aa)). A helical; Anchor for type IV membrane protein transmembrane segment spans residues 285–305 (WLCIGIIILLLLVLLVIVPIA). Topologically, residues 306–311 (TSFKRS) are vesicular.

It belongs to the syntaxin family. In terms of tissue distribution, expressed in roots and panicles.

It localises to the cell membrane. The protein localises to the cytoplasm. Functionally, vesicle trafficking protein that functions in the secretory pathway. The polypeptide is Syntaxin-111 (Oryza sativa subsp. japonica (Rice)).